Reading from the N-terminus, the 1624-residue chain is NAD-specific glutamate dehydrogenase (1624 aa).

Lysine 845 is an active-site residue.

This sequence belongs to the Glu/Leu/Phe/Val dehydrogenases family. Interacts with (unphosphorylated) GarA.

It carries out the reaction L-glutamate + NAD(+) + H2O = 2-oxoglutarate + NH4(+) + NADH + H(+). Activity is inhibited by unphosphorylated GarA. Its function is as follows. Catalyzes the reversible conversion of L-glutamate to 2-oxoglutarate. This is NAD-specific glutamate dehydrogenase (gdh) from Mycobacterium tuberculosis (strain ATCC 25618 / H37Rv).